Here is a 42-residue protein sequence, read N- to C-terminus: Fungal defensin eurocin (42 aa).

Beta-D-GlcNAc-(1-&gt;4)-Mur2Ac(oyl-L-Ala-gamma-D-Glu-L-Lys-D-Ala-D-Ala)-di-trans,octa-cis-undecaprenyl diphosphate contacts are provided by phenylalanine 2, glycine 3, cysteine 4, and histidine 14. 3 cysteine pairs are disulfide-bonded: cysteine 4/cysteine 27, cysteine 11/cysteine 38, and cysteine 15/cysteine 40. The segment at 31–35 is interaction site with membranes lipids; that stretch reads WYLGH. A beta-D-GlcNAc-(1-&gt;4)-Mur2Ac(oyl-L-Ala-gamma-D-Glu-L-Lys-D-Ala-D-Ala)-di-trans,octa-cis-undecaprenyl diphosphate-binding site is contributed by cysteine 38.

This sequence belongs to the invertebrate defensin family.

The protein localises to the secreted. It is found in the target cell membrane. Its function is as follows. Antimicrobial peptide that acts against Gram-positive bacteria but not against Gram-negative bacteria. It selectively inhibits peptidoglycan biosynthesis through complex formation with the cell wall precursor lipid II (1:1 molar ratio) thus inhibiting cell wall synthesis. It does not disrupt cell membranes. In vivo, is effective against an intraperitoneal infection with S.pneumoniae. In vitro, it shows very low hemolytic and cytolytic activities. The polypeptide is Fungal defensin eurocin (Aspergillus amstelodami).